We begin with the raw amino-acid sequence, 142 residues long: Transcriptional regulator MraZ (142 aa).

2 SpoVT-AbrB domains span residues 5 to 47 and 76 to 119; these read EYQH…TINE and ACIV…SREK.

This sequence belongs to the MraZ family. As to quaternary structure, forms oligomers.

It localises to the cytoplasm. The protein resides in the nucleoid. The sequence is that of Transcriptional regulator MraZ from Clostridium botulinum (strain Alaska E43 / Type E3).